The following is a 357-amino-acid chain: DNA replication and repair protein RecF (357 aa).

Position 30–37 (30–37 (GANGSGKT)) interacts with ATP.

It belongs to the RecF family.

Its subcellular location is the cytoplasm. In terms of biological role, the RecF protein is involved in DNA metabolism; it is required for DNA replication and normal SOS inducibility. RecF binds preferentially to single-stranded, linear DNA. It also seems to bind ATP. The chain is DNA replication and repair protein RecF from Shigella boydii serotype 4 (strain Sb227).